The primary structure comprises 586 residues: ATP-dependent lipid A-core flippase (586 aa).

4 consecutive transmembrane segments (helical) span residues 25 to 45 (AYFI…AQLI), 74 to 94 (LWFV…GAYF), 163 to 183 (VAWF…AFIC), and 264 to 284 (VLHI…MILW). The ABC transmembrane type-1 domain maps to 28–317 (IISFIGFGVF…LTKINSIIQK (290 aa)). One can recognise an ABC transporter domain in the interval 349–583 (VELKDVHFGY…SGVYANLYHS (235 aa)). Position 382 to 389 (382 to 389 (GSSGSGKS)) interacts with ATP.

This sequence belongs to the ABC transporter superfamily. Lipid exporter (TC 3.A.1.106) family. In terms of assembly, homodimer.

The protein resides in the cell inner membrane. The catalysed reaction is ATP + H2O + lipid A-core oligosaccharideSide 1 = ADP + phosphate + lipid A-core oligosaccharideSide 2.. Functionally, involved in lipopolysaccharide (LPS) biosynthesis. Translocates lipid A-core from the inner to the outer leaflet of the inner membrane. Transmembrane domains (TMD) form a pore in the inner membrane and the ATP-binding domain (NBD) is responsible for energy generation. The polypeptide is ATP-dependent lipid A-core flippase (Saccharophagus degradans (strain 2-40 / ATCC 43961 / DSM 17024)).